We begin with the raw amino-acid sequence, 428 residues long: MFVDQVKVYVKGGDGGNGMVAFRREKYVPKGGPAGGDGGKGGDVVFEVDEGLRTLMDFRYKKHFKAIRGEHGMSKNQHGRNADDMVIKVPPGTVVTDDDTKQVIADLTEHGQRAVIARGGRGGRGNSRFATPANPAPQLSENGEPGKERYIVLELKVLADVGLVGFPSVGKSTLLSVVSSAKPKIADYHFTTLVPNLGMVETDDGRSFVMADLPGLIEGAHQGVGLGHQFLRHIERTRVIVHVIDMSGLEGRDPYDDYLTINQELSEYNLRLTERPQIIVANKMDMPEAAENLEAFKEKLTDDYPVFPISAVTREGLRELLFEVANQLENTPEFPLYDEEELTQNRVMYTMENEEVPFNITRDPDGVFVLSGDSLERLFKMTDFSRDESVKRFARQMRGMGVDEALRERGAKDGDIIRLLEFEFEFID.

The Obg domain occupies 1-158 (MFVDQVKVYV…RYIVLELKVL (158 aa)). Residues 117 to 143 (ARGGRGGRGNSRFATPANPAPQLSENG) form a disordered region. One can recognise an OBG-type G domain in the interval 159 to 329 (ADVGLVGFPS…LLFEVANQLE (171 aa)). GTP contacts are provided by residues 165 to 172 (GFPSVGKS), 190 to 194 (FTTLV), 212 to 215 (DLPG), 282 to 285 (NKMD), and 310 to 312 (SAV). S172 and T192 together coordinate Mg(2+). The 79-residue stretch at 350–428 (TMENEEVPFN…LLEFEFEFID (79 aa)) folds into the OCT domain.

The protein belongs to the TRAFAC class OBG-HflX-like GTPase superfamily. OBG GTPase family. In terms of assembly, monomer. Interacts with TasA (AC P54507) in pull-down experiments. Mg(2+) serves as cofactor.

The protein localises to the cytoplasm. With respect to regulation, inhibited by GDP; less than 20 uM ppGpp stimulates the GTPase, while higher concentrations inhibit. In terms of biological role, necessary for the transition from vegetative growth to stage 0 or stage II of sporulation, but sporulation subsequent to these stages is unaffected at 45 degrees Celsius. This ts effect is probably due solely to the E-79 mutation. Required for expression of early sporulation genes, further suggesting a role in the induction of sporulation. Depletion effects on sporulation can be partially suppressed by missense mutations in spo0A. Strains depleted for obg stop growing after about 3 hours and do not induce the sigma-B factor following ethanol stress. It cofractionates with the ribosome and upstream stress response regulators RsbR, RsbS and RsbT in size fractionation columns, suggesting the ribosome might serve as a possible mediator of the activity of obg and the stress induction of sigma-B. In glycerol gradients partially associates with ribosomes; this is stabilized by a nonhydrolyzable GTP-analog and to a lesser extent GTP and GDP. An essential GTPase which binds GTP, GDP and possibly (p)ppGpp with moderate affinity, with high nucleotide exchange rates and a fairly low GTP hydrolysis rate. Plays a role in control of the cell cycle, stress response, ribosome biogenesis and in those bacteria that undergo differentiation, in morphogenesis control. The protein is GTPase Obg of Bacillus subtilis (strain 168).